The following is a 46-amino-acid chain: Phospholipase A2 superbin c (46 aa).

Ca(2+)-binding residues include Tyr-28, Gly-30, and Gly-32. Cys-29 and Cys-45 form a disulfide bridge.

Ca(2+) serves as cofactor. In terms of tissue distribution, expressed by the venom gland.

Its subcellular location is the secreted. The enzyme catalyses a 1,2-diacyl-sn-glycero-3-phosphocholine + H2O = a 1-acyl-sn-glycero-3-phosphocholine + a fatty acid + H(+). Its function is as follows. Snake venom phospholipase A2 (PLA2) that inhibits collagen-induced platelet aggregation. In terms of inhibition of platelet aggregation, superbin c is more potent as superbin d. PLA2 catalyzes the calcium-dependent hydrolysis of the 2-acyl groups in 3-sn-phosphoglycerides. The chain is Phospholipase A2 superbin c from Austrelaps superbus (Lowland copperhead snake).